We begin with the raw amino-acid sequence, 135 residues long: Evasin P1134 (135 aa).

Residues 1–31 (MEVKTFAFLQIAVFIALGIQIFAAVTAAADA) form the signal peptide. 3 disulfide bridges follow: C41/C63, C45/C65, and C56/C76. A glycan (N-linked (GlcNAc...) asparagine) is linked at N44. The disordered stretch occupies residues 88-112 (ETPSNSDLEAATPRPRKTLYPVRNP).

Its subcellular location is the secreted. In terms of biological role, salivary chemokine-binding protein which binds to host chemokine CXCL1. The chain is Evasin P1134 from Ixodes ricinus (Common tick).